Here is a 577-residue protein sequence, read N- to C-terminus: MARLSRERYAQLYGPTTGDRIRLADTDLLVEITEDRCGGPGLAGDEAVFGGGKVLRESMGQGRVTRAEGAPDTVITGAVIIDYWGIIKADIGIRDGRIVAIGKAGNPNIMSGIHPDLVVGPSTEIIGGNGRIVTAGAIDCHVHLICPQVIAEALGSGITTIIGGGTGPAEGSKSTTVTPGGWHLARMLEALDSWPVNIALLGKGNTVNPDALWEQLRGGASGFKLHEDWGSSPAAIDACLTVADAAGVQVALHSDTLNEMGFVEDTLAAIAGRSIHTYHTEGAGGGHAPDIITVAAHPNVLPSSTNPTRPHTVNTLDEHLDMLMVCHHLNPRIPEDLAFAESRIRPSTIAAEDLLHDIGAISMIGSDSQAMGRVGEVVMRTWQTAHVMKQRRGALEGDPSGRYSADNNRARRYVAKYTICPAVAHGLDHEVGSVEVGKLADLVLWEPAFFGVRPHAVVKGGAIAWAAMGDANASIPTPQPVLPRPMFGASPAVAAATSVHFVAAQSIEAGLADQIAVDRRLVPVADVRAVGKADMPLNDAQPRIEVDPDTFTVRIDGEVWEQQPATELPMAQRYFLF.

Residues 136-577 (GAIDCHVHLI…LPMAQRYFLF (442 aa)) form the Urease domain. The Ni(2+) site is built by His141, His143, and Lys224. Lys224 is subject to N6-carboxylysine. Position 226 (His226) interacts with substrate. Ni(2+) contacts are provided by His253 and His279. His327 (proton donor) is an active-site residue. Residue Asp367 coordinates Ni(2+).

The protein belongs to the metallo-dependent hydrolases superfamily. Urease alpha subunit family. As to quaternary structure, heterotrimer of UreA (gamma), UreB (beta) and UreC (alpha) subunits. Three heterotrimers associate to form the active enzyme. Ni cation is required as a cofactor. Post-translationally, carboxylation allows a single lysine to coordinate two nickel ions.

It localises to the cytoplasm. It catalyses the reaction urea + 2 H2O + H(+) = hydrogencarbonate + 2 NH4(+). It participates in nitrogen metabolism; urea degradation; CO(2) and NH(3) from urea (urease route): step 1/1. The sequence is that of Urease subunit alpha from Mycobacterium marinum (strain ATCC BAA-535 / M).